The sequence spans 481 residues: Aspartyl/glutamyl-tRNA(Asn/Gln) amidotransferase subunit B (481 aa).

This sequence belongs to the GatB/GatE family. GatB subfamily. As to quaternary structure, heterotrimer of A, B and C subunits.

The catalysed reaction is L-glutamyl-tRNA(Gln) + L-glutamine + ATP + H2O = L-glutaminyl-tRNA(Gln) + L-glutamate + ADP + phosphate + H(+). The enzyme catalyses L-aspartyl-tRNA(Asn) + L-glutamine + ATP + H2O = L-asparaginyl-tRNA(Asn) + L-glutamate + ADP + phosphate + 2 H(+). In terms of biological role, allows the formation of correctly charged Asn-tRNA(Asn) or Gln-tRNA(Gln) through the transamidation of misacylated Asp-tRNA(Asn) or Glu-tRNA(Gln) in organisms which lack either or both of asparaginyl-tRNA or glutaminyl-tRNA synthetases. The reaction takes place in the presence of glutamine and ATP through an activated phospho-Asp-tRNA(Asn) or phospho-Glu-tRNA(Gln). The sequence is that of Aspartyl/glutamyl-tRNA(Asn/Gln) amidotransferase subunit B from Pseudomonas paraeruginosa (strain DSM 24068 / PA7) (Pseudomonas aeruginosa (strain PA7)).